Consider the following 318-residue polypeptide: MVKPKIALIGGGQIGNSIAHLAAMRELGNVIMFDIKDGLAQGKCLDIAQAAPISNFDVQLCGSNDISCIAGADIVVVTAGIPRKPGMTREDLIEINARIMVTVAEGIKTHAPESIVIVLSNPLDAMVTLCQKITGFPTQRIMGMAGVLDSARFASFIAWELGVSVRDVNAMVLGGHGDAMVPIVRFANVNGIPALELLKNKYGDEDKARQVMAGLVERTQDAGGEVVHLLQTGSAFISPATSAIAMVEAVIHDQKRLLPVCAMLDGQFGISGYYVGVPCILGVGGVERIVEFELTEDEQALLDHSVGEVKKLVDSLPL.

NAD(+) contacts are provided by residues 10–15 (GGGQIG) and D34. Residues R83 and R89 each contribute to the substrate site. NAD(+) contacts are provided by residues N96 and 119–121 (LSN). Positions 121 and 152 each coordinate substrate. H176 (proton acceptor) is an active-site residue.

It belongs to the LDH/MDH superfamily. MDH type 3 family.

The enzyme catalyses (S)-malate + NAD(+) = oxaloacetate + NADH + H(+). Catalyzes the reversible oxidation of malate to oxaloacetate. The chain is Malate dehydrogenase from Syntrophotalea carbinolica (strain DSM 2380 / NBRC 103641 / GraBd1) (Pelobacter carbinolicus).